Reading from the N-terminus, the 470-residue chain is Cupincin (470 aa).

An N-terminal signal peptide occupies residues 1-34; the sequence is MAKKKTSSSMARSQLAALLISLCFLSLASNAVGW. Residues 36 to 52 show a composition bias toward basic and acidic residues; the sequence is RRGEREEEDERRRHGGE. Disordered stretches follow at residues 36-57 and 240-261; these read RRGEREEEDERRRHGGEGGRPY and KSCSRGGGGGSGSEWEIKPSSL. 2 consecutive Cupin type-1 domains span residues 57-215 and 259-445; these read YHFG…EELE and SSLT…AREA. Asn297 is a glycosylation site (N-linked (GlcNAc...) asparagine). The disordered stretch occupies residues 330–368; the sequence is PHVSGGGSSERREREREHGRRREEEQGEEEHGERGEKAR. Residues 338–367 show a composition bias toward basic and acidic residues; that stretch reads SERREREREHGRRREEEQGEEEHGERGEKA. The Zn(2+) site is built by His347, Glu352, and His360.

This sequence belongs to the 7S seed storage protein family. Homotrimer. The cofactor is Zn(2+).

Its subcellular location is the secreted. In terms of biological role, seed storage protein. Globulin-like protein that acts as a zinc metalloprotease. Cleaves specifically between Leu-15 and Tyr-16 of insulin B chain, and Gln-1 and Leu-2 of neurotensin (NT) peptide in vitro. May play a role as an initiating endopeptidase in germinating seeds. This Oryza sativa subsp. indica (Rice) protein is Cupincin.